The following is a 436-amino-acid chain: Mannitol-binding protein (436 aa).

Residues 1 to 22 (MNDSIKACLAAACLALPLLAQG) form the signal peptide.

Belongs to the bacterial solute-binding protein 1 family.

The protein resides in the periplasm. Binds mannitol with high affinity. The sequence is that of Mannitol-binding protein from Pseudomonas aeruginosa (strain ATCC 15692 / DSM 22644 / CIP 104116 / JCM 14847 / LMG 12228 / 1C / PRS 101 / PAO1).